A 247-amino-acid polypeptide reads, in one-letter code: Tetraspanin-18 (247 aa).

Over 1-15 (MEGDCLSCMKYLMFL) the chain is Cytoplasmic. The chain crosses the membrane as a helical span at residues 16–36 (FNFFIFLGGACLLGVGIWVIV). At 37 to 49 (DPTGFREIVAANP) the chain is on the extracellular side. A helical membrane pass occupies residues 50–70 (LLFTGAYIMLAMGAMLFLLGF). Residues 71–82 (LGCCGAIRENKC) lie on the Cytoplasmic side of the membrane. Residues 83-103 (LLLFFFMFILLIFLAELSAAI) form a helical membrane-spanning segment. Over 104 to 222 (LAFIFRENLT…SFETYVYLAG (119 aa)) the chain is Extracellular. N-linked (GlcNAc...) asparagine glycosylation is found at N111 and N129. The chain crosses the membrane as a helical span at residues 223–243 (ALAIGVLAIELFAMIFAMCLF). Residues 244–247 (RGIQ) are Cytoplasmic-facing.

Belongs to the tetraspanin (TM4SF) family.

It is found in the membrane. In terms of biological role, maintains CDH6 protein and promotes CDH6-dependent adherens junctions, inhibiting neural crest migration. This is Tetraspanin-18 from Gallus gallus (Chicken).